A 288-amino-acid chain; its full sequence is Quinate/shikimate dehydrogenase (288 aa).

Residues K71 and D107 each coordinate substrate. NAD(+)-binding positions include 132 to 135, 155 to 158, K205, 232 to 235, and G255; these read AGGA, NRRD, and CVYN.

This sequence belongs to the shikimate dehydrogenase family. Homodimer.

The catalysed reaction is L-quinate + NAD(+) = 3-dehydroquinate + NADH + H(+). The enzyme catalyses L-quinate + NADP(+) = 3-dehydroquinate + NADPH + H(+). It carries out the reaction shikimate + NADP(+) = 3-dehydroshikimate + NADPH + H(+). It catalyses the reaction shikimate + NAD(+) = 3-dehydroshikimate + NADH + H(+). It functions in the pathway metabolic intermediate biosynthesis; chorismate biosynthesis; chorismate from D-erythrose 4-phosphate and phosphoenolpyruvate: step 4/7. In terms of biological role, the actual biological function of YdiB remains unclear, nor is it known whether 3-dehydroshikimate or quinate represents the natural substrate. Catalyzes the reversible NAD-dependent reduction of both 3-dehydroshikimate (DHSA) and 3-dehydroquinate to yield shikimate (SA) and quinate, respectively. It can use both NAD or NADP for catalysis, however it has higher catalytic efficiency with NAD. The protein is Quinate/shikimate dehydrogenase of Escherichia coli (strain SMS-3-5 / SECEC).